The sequence spans 731 residues: Putative pentatricopeptide repeat-containing protein At1g17630 (731 aa).

PPR repeat units follow at residues 88–118 (SGSL…VSLV), 122–156 (DLRL…GLTG), 157–191 (DGYI…GLKE), 192–222 (NLHV…MPVR), 223–257 (NRMS…EFKP), 258–292 (DEVT…GNAV), 293–327 (SGEA…GFEE), 328–358 (YLPS…IRNK), 359–393 (GIES…NHVC), 398–432 (NVVT…KVLA), 433–467 (NSVT…SMSE), 468–498 (NILV…IRDK), 499–533 (DLIS…GFHP), 534–569 (DGIA…GLEP), and 570–600 (QQEH…MPME). Residues 605 to 680 (VLGALLNSCR…VSGSSWIEVK (76 aa)) are type E motif. Residues 681 to 711 (KKKYKFSSGSIVQSEFETIYPVLEDLVSHML) form a type E(+) motif region.

Belongs to the PPR family. PCMP-E subfamily.

The protein is Putative pentatricopeptide repeat-containing protein At1g17630 (PCMP-E72) of Arabidopsis thaliana (Mouse-ear cress).